The chain runs to 490 residues: Betaine aldehyde dehydrogenase (490 aa).

Residues I27 and D93 each contribute to the K(+) site. NAD(+) is bound at residue 150–152; that stretch reads GAW. Catalysis depends on K162, which acts as the Charge relay system. 176 to 179 contributes to the NAD(+) binding site; it reads KPSE. A K(+)-binding site is contributed by V180. 230–233 serves as a coordination point for NAD(+); that stretch reads GTTT. L246 is a binding site for K(+). E252 serves as the catalytic Proton acceptor. NAD(+) is bound by residues G254, C286, and E387. Residue C286 is the Nucleophile of the active site. C286 carries the post-translational modification Cysteine sulfenic acid (-SOH). K457 and G460 together coordinate K(+). E464 serves as the catalytic Charge relay system.

This sequence belongs to the aldehyde dehydrogenase family. As to quaternary structure, dimer of dimers. Requires K(+) as cofactor.

It carries out the reaction betaine aldehyde + NAD(+) + H2O = glycine betaine + NADH + 2 H(+). It participates in amine and polyamine biosynthesis; betaine biosynthesis via choline pathway; betaine from betaine aldehyde: step 1/1. Involved in the biosynthesis of the osmoprotectant glycine betaine. Catalyzes the irreversible oxidation of betaine aldehyde to the corresponding acid. The sequence is that of Betaine aldehyde dehydrogenase from Pseudomonas putida (strain W619).